Reading from the N-terminus, the 34-residue chain is Hemopexin (34 aa).

The disordered stretch occupies residues 1-25 (RPLTQHKPHTPGDEHPHGAEPPGXD).

The protein belongs to the hemopexin family. In terms of tissue distribution, expressed by the liver and secreted in plasma.

It localises to the secreted. In terms of biological role, binds heme and transports it to the liver for breakdown and iron recovery, after which the free hemopexin returns to the circulation. The sequence is that of Hemopexin (HPX) from Gallus gallus (Chicken).